The chain runs to 248 residues: MAALQQTPITFQSRSPPPTQIISGPTAKLSFSGGLKLPKLTIKLRSNRTSRRGGGAAGSKMVASAAGSYANALADIAKSNGTLEQTTADLEKIEKISDDEAVFNFFVSPIVGEEKKRELVDEIVSSSSIQPHVANFLNILVDMKRVELIKEIVKEFEKVYNTLTDTELAVVTSVVKLESQHLAQIAKGVQRLTGSKNVRIKTVIDESLVAGFTIRYGNSGSKLIDMSVKKQLEDIAAQLEIGDIQLAV.

The transit peptide at 1–60 (MAALQQTPITFQSRSPPPTQIISGPTAKLSFSGGLKLPKLTIKLRSNRTSRRGGGAAGSK) directs the protein to the chloroplast.

Belongs to the ATPase delta chain family. As to quaternary structure, F-type ATPases have 2 components, CF(1) - the catalytic core - and CF(0) - the membrane proton channel. CF(1) has five subunits: alpha(3), beta(3), gamma(1), delta(1), epsilon(1). CF(0) has three main subunits: a, b and c.

Its subcellular location is the plastid. The protein resides in the chloroplast thylakoid membrane. In terms of biological role, this protein seems to be part of the stalk that links CF(0) to CF(1). It either transmits conformational changes from CF(0) into CF(1) or is implicated in proton conduction. The sequence is that of ATP synthase delta chain, chloroplastic (ATPD) from Nicotiana tabacum (Common tobacco).